Reading from the N-terminus, the 164-residue chain is Lipoprotein signal peptidase (164 aa).

A run of 4 helical transmembrane segments spans residues 12 to 32, 42 to 62, 70 to 90, and 102 to 122; these read WLWL…LILQ, LFPS…SFLA, WFFA…MYRS, and ALII…GFVV. Active-site residues include Asp-123 and Asp-141. The chain crosses the membrane as a helical span at residues 137-157; sequence FNLADTAICVGAALIVLEGFL.

It belongs to the peptidase A8 family.

The protein localises to the cell inner membrane. It catalyses the reaction Release of signal peptides from bacterial membrane prolipoproteins. Hydrolyzes -Xaa-Yaa-Zaa-|-(S,diacylglyceryl)Cys-, in which Xaa is hydrophobic (preferably Leu), and Yaa (Ala or Ser) and Zaa (Gly or Ala) have small, neutral side chains.. It functions in the pathway protein modification; lipoprotein biosynthesis (signal peptide cleavage). Functionally, this protein specifically catalyzes the removal of signal peptides from prolipoproteins. The sequence is that of Lipoprotein signal peptidase from Shigella flexneri serotype 5b (strain 8401).